The following is an 81-amino-acid chain: Consomatin Le1 (81 aa).

Residues 1 to 22 (MQTAYWVMVMMMVWITAPLSEG) form the signal peptide. A propeptide spanning residues 23–57 (GKPNDVIRGLVPDDLTPQLILRSLISRRRSDKDVR) is cleaved from the precursor. A 4-carboxyglutamate modification is found at Glu58. Residues Cys62 and Cys67 are joined by a disulfide bond. The residue at position 64 (Trp64) is a D-tryptophan. Pro69 bears the 4-hydroxyproline mark. The propeptide occupies 71–81 (LWRRHDLKGKD).

It belongs to the conotoxin C superfamily. Consomatin family. In terms of tissue distribution, expressed by the venom duct.

It is found in the secreted. In terms of biological role, moderately activates human somatostatin receptors (SSTR) with a preferential activation of SSTR1 and SSTR4. In vivo, does not cause behavioral changes in mice within a few minutes of intracranial injection, but causes a progressive loss of movement thereafter. Four to five hours after injection, mice recover, even with the highest dose tested. Shows antinociception and antihyperalgesia activities in two mouse models of acute pain, most probably by acting outside the central nervous system. This is Consomatin Le1 from Conus lenavati (Cone snail).